A 270-amino-acid chain; its full sequence is Catechol 1,2-dioxygenase (270 aa).

Residues Tyr-152, Tyr-186, His-210, and His-212 each coordinate Fe cation.

Belongs to the intradiol ring-cleavage dioxygenase family. Fe(3+) is required as a cofactor.

The catalysed reaction is catechol + O2 = cis,cis-muconate + 2 H(+). This Rhodococcus opacus (Nocardia opaca) protein is Catechol 1,2-dioxygenase (catA).